The primary structure comprises 140 residues: Phosphopantetheine adenylyltransferase (140 aa).

A substrate-binding site is contributed by Ser9. ATP contacts are provided by residues 9–10 (SF) and His17. Residues Lys41, Thr74, and Arg88 each contribute to the substrate site. ATP is bound by residues 89–91 (GLR), Glu99, and 124–130 (KRSLSST).

It belongs to the bacterial CoaD family. In terms of assembly, homohexamer. The cofactor is Mg(2+).

Its subcellular location is the cytoplasm. The catalysed reaction is (R)-4'-phosphopantetheine + ATP + H(+) = 3'-dephospho-CoA + diphosphate. The protein operates within cofactor biosynthesis; coenzyme A biosynthesis; CoA from (R)-pantothenate: step 4/5. Functionally, reversibly transfers an adenylyl group from ATP to 4'-phosphopantetheine, yielding dephospho-CoA (dPCoA) and pyrophosphate. The sequence is that of Phosphopantetheine adenylyltransferase from Mycoplasma mycoides subsp. mycoides SC (strain CCUG 32753 / NCTC 10114 / PG1).